A 500-amino-acid polypeptide reads, in one-letter code: Glycerol kinase (500 aa).

Thr14 serves as a coordination point for ADP. ATP-binding residues include Thr14, Thr15, and Ser16. A sn-glycerol 3-phosphate-binding site is contributed by Thr14. Arg18 contacts ADP. Positions 84, 85, and 136 each coordinate sn-glycerol 3-phosphate. Arg84, Glu85, and Tyr136 together coordinate glycerol. At His232 the chain carries Phosphohistidine; by HPr. Asp246 contacts sn-glycerol 3-phosphate. Asp246 and Gln247 together coordinate glycerol. ADP-binding residues include Thr268 and Gly311. Thr268, Gly311, Gln315, and Gly412 together coordinate ATP. ADP-binding residues include Gly412 and Asn416.

Belongs to the FGGY kinase family. In terms of assembly, homotetramer and homodimer (in equilibrium). In terms of processing, the phosphoenolpyruvate-dependent sugar phosphotransferase system (PTS), including enzyme I, and histidine-containing protein (HPr) are required for the phosphorylation, which leads to the activation of the enzyme.

The enzyme catalyses glycerol + ATP = sn-glycerol 3-phosphate + ADP + H(+). Its pathway is polyol metabolism; glycerol degradation via glycerol kinase pathway; sn-glycerol 3-phosphate from glycerol: step 1/1. With respect to regulation, activated by phosphorylation and inhibited by fructose 1,6-bisphosphate (FBP). Its function is as follows. Key enzyme in the regulation of glycerol uptake and metabolism. Catalyzes the phosphorylation of glycerol to yield sn-glycerol 3-phosphate. This chain is Glycerol kinase, found in Limosilactobacillus reuteri (strain DSM 20016) (Lactobacillus reuteri).